The primary structure comprises 141 residues: Hemoglobin subunit alpha-D (141 aa).

One can recognise a Globin domain in the interval 1–141 (MLTAEDKKLI…VAAVLAEKYR (141 aa)). Heme b contacts are provided by histidine 58 and histidine 87.

This sequence belongs to the globin family. Heterotetramer of two alpha-D chains and two beta chains. In terms of tissue distribution, red blood cells.

Its function is as follows. Involved in oxygen transport from the lung to the various peripheral tissues. The sequence is that of Hemoglobin subunit alpha-D (HBAD) from Anas platyrhynchos (Mallard).